A 245-amino-acid chain; its full sequence is tRNA pseudouridine synthase A (245 aa).

The active-site Nucleophile is the aspartate 52. Tyrosine 111 contributes to the substrate binding site.

Belongs to the tRNA pseudouridine synthase TruA family. In terms of assembly, homodimer.

It carries out the reaction uridine(38/39/40) in tRNA = pseudouridine(38/39/40) in tRNA. Functionally, formation of pseudouridine at positions 38, 39 and 40 in the anticodon stem and loop of transfer RNAs. The chain is tRNA pseudouridine synthase A from Wolbachia sp. subsp. Drosophila simulans (strain wRi).